We begin with the raw amino-acid sequence, 902 residues long: Protein translocase subunit SecA (902 aa).

Residues Q87, 105–109 (GEGKT), and D512 each bind ATP. The tract at residues 847–902 (DAERLARQQQLSHLDDQSAAAQEMASQTGDRKIGRNDPCPCGSGKKYKQCHGRLNA) is disordered. Positions 885, 887, 896, and 897 each coordinate Zn(2+). Residues 891–902 (KKYKQCHGRLNA) show a composition bias toward basic residues.

This sequence belongs to the SecA family. Monomer and homodimer. Part of the essential Sec protein translocation apparatus which comprises SecA, SecYEG and auxiliary proteins SecDF-YajC and YidC. Zn(2+) serves as cofactor.

It is found in the cell inner membrane. Its subcellular location is the cytoplasm. The catalysed reaction is ATP + H2O + cellular proteinSide 1 = ADP + phosphate + cellular proteinSide 2.. Functionally, part of the Sec protein translocase complex. Interacts with the SecYEG preprotein conducting channel. Has a central role in coupling the hydrolysis of ATP to the transfer of proteins into and across the cell membrane, serving both as a receptor for the preprotein-SecB complex and as an ATP-driven molecular motor driving the stepwise translocation of polypeptide chains across the membrane. This Edwardsiella ictaluri (strain 93-146) protein is Protein translocase subunit SecA.